Here is a 178-residue protein sequence, read N- to C-terminus: Protein GrpE (178 aa).

The span at 1–11 shows a compositional bias: basic and acidic residues; the sequence is MADELSEKSVE. The tract at residues 1–32 is disordered; sequence MADELSEKSVEGTEEDGESAPAEGTTEGVPVD.

This sequence belongs to the GrpE family. As to quaternary structure, homodimer.

It localises to the cytoplasm. Its function is as follows. Participates actively in the response to hyperosmotic and heat shock by preventing the aggregation of stress-denatured proteins, in association with DnaK and GrpE. It is the nucleotide exchange factor for DnaK and may function as a thermosensor. Unfolded proteins bind initially to DnaJ; upon interaction with the DnaJ-bound protein, DnaK hydrolyzes its bound ATP, resulting in the formation of a stable complex. GrpE releases ADP from DnaK; ATP binding to DnaK triggers the release of the substrate protein, thus completing the reaction cycle. Several rounds of ATP-dependent interactions between DnaJ, DnaK and GrpE are required for fully efficient folding. In Methanothrix thermoacetophila (strain DSM 6194 / JCM 14653 / NBRC 101360 / PT) (Methanosaeta thermophila), this protein is Protein GrpE.